A 1279-amino-acid polypeptide reads, in one-letter code: ATP-dependent helicase/nuclease subunit A (1279 aa).

Positions 4 to 499 constitute a UvrD-like helicase ATP-binding domain; it reads TKWTDEQRQA…VKLFKNFRSR (496 aa). 25–32 serves as a coordination point for ATP; that stretch reads AGAGAGKT. One can recognise a UvrD-like helicase C-terminal domain in the interval 526 to 853; it reads EEALKVGASY…RIMSIHKSKG (328 aa).

This sequence belongs to the helicase family. AddA subfamily. Heterodimer of AddA and AddB/RexB. It depends on Mg(2+) as a cofactor.

It carries out the reaction Couples ATP hydrolysis with the unwinding of duplex DNA by translocating in the 3'-5' direction.. The enzyme catalyses ATP + H2O = ADP + phosphate + H(+). Functionally, the heterodimer acts as both an ATP-dependent DNA helicase and an ATP-dependent, dual-direction single-stranded exonuclease. Recognizes the chi site generating a DNA molecule suitable for the initiation of homologous recombination. The AddA nuclease domain is required for chi fragment generation; this subunit has the helicase and 3' -&gt; 5' nuclease activities. In Clostridium botulinum (strain Kyoto / Type A2), this protein is ATP-dependent helicase/nuclease subunit A.